Consider the following 380-residue polypeptide: Beta sliding clamp (380 aa).

The protein belongs to the beta sliding clamp family. Forms a ring-shaped head-to-tail homodimer around DNA which binds and tethers DNA polymerases and other proteins to the DNA. The DNA replisome complex has a single clamp-loading complex (3 tau and 1 each of delta, delta', psi and chi subunits) which binds 3 Pol III cores (1 core on the leading strand and 2 on the lagging strand) each with a beta sliding clamp dimer. Additional proteins in the replisome are other copies of gamma, psi and chi, Ssb, DNA helicase and RNA primase.

It localises to the cytoplasm. Functionally, confers DNA tethering and processivity to DNA polymerases and other proteins. Acts as a clamp, forming a ring around DNA (a reaction catalyzed by the clamp-loading complex) which diffuses in an ATP-independent manner freely and bidirectionally along dsDNA. Initially characterized for its ability to contact the catalytic subunit of DNA polymerase III (Pol III), a complex, multichain enzyme responsible for most of the replicative synthesis in bacteria; Pol III exhibits 3'-5' exonuclease proofreading activity. The beta chain is required for initiation of replication as well as for processivity of DNA replication. The chain is Beta sliding clamp (dnaN) from Halalkalibacterium halodurans (strain ATCC BAA-125 / DSM 18197 / FERM 7344 / JCM 9153 / C-125) (Bacillus halodurans).